Reading from the N-terminus, the 942-residue chain is Zinc finger protein 865 (942 aa).

Residues 66 to 106 (FASTSTSKPKEFKVEAPPSSSLSPSKKPDIATTQQFNNQPP) form a disordered region. Polar residues predominate over residues 96–106 (ATTQQFNNQPP). C2H2-type zinc fingers lie at residues 172 to 194 (FPCT…MLVH), 200 to 222 (YECN…RRCH), 282 to 304 (FTCT…QIIH), 310 to 332 (FSCS…VKTH), 338 to 360 (VQCE…QATH), 367 to 389 (YKCE…KQVH), 466 to 488 (FCCN…ERIH), 494 to 516 (HQCS…HVVH), 522 to 544 (YKCE…KQIH), 564 to 586 (FGCT…KELH), 592 to 614 (YVCD…KLVH), 678 to 700 (FSCS…KYVH), 706 to 728 (LACN…RRTH), 734 to 756 (FTCS…QRCH), 762 to 784 (YRCT…KVVH), 790 to 812 (YKCA…QRLH), 818 to 840 (QRCP…QRVH), 846 to 868 (YRCD…QRSH), 874 to 896 (LRCS…VQTH), and 902 to 924 (FKCG…RHAH).

It belongs to the krueppel C2H2-type zinc-finger protein family.

It is found in the nucleus. Its function is as follows. May be involved in transcriptional regulation. The chain is Zinc finger protein 865 (znf865) from Xenopus tropicalis (Western clawed frog).